We begin with the raw amino-acid sequence, 311 residues long: GTPase Era (311 aa).

An Era-type G domain is found at 16 to 188 (HAGFVAIVGK…REQLLEVLPE (173 aa)). The tract at residues 24–31 (GKPNVGKS) is G1. Position 24–31 (24–31 (GKPNVGKS)) interacts with GTP. Residues 50 to 54 (QTTRR) are G2. Positions 71-74 (DTPG) are G3. GTP contacts are provided by residues 71-75 (DTPGL) and 133-136 (NKTD). The tract at residues 133–136 (NKTD) is G4. The segment at 166 to 168 (LSA) is G5. A KH type-2 domain is found at 219-296 (LRDELPYAVA…YLGLEVIVIP (78 aa)).

The protein belongs to the TRAFAC class TrmE-Era-EngA-EngB-Septin-like GTPase superfamily. Era GTPase family. In terms of assembly, monomer.

It is found in the cytoplasm. The protein localises to the cell membrane. In terms of biological role, an essential GTPase that binds both GDP and GTP, with rapid nucleotide exchange. Plays a role in 16S rRNA processing and 30S ribosomal subunit biogenesis and possibly also in cell cycle regulation and energy metabolism. This is GTPase Era from Deinococcus radiodurans (strain ATCC 13939 / DSM 20539 / JCM 16871 / CCUG 27074 / LMG 4051 / NBRC 15346 / NCIMB 9279 / VKM B-1422 / R1).